A 97-amino-acid chain; its full sequence is Citrate lyase acyl carrier protein (97 aa).

Serine 14 is modified (O-(phosphoribosyl dephospho-coenzyme A)serine).

It belongs to the CitD family. Oligomer with a subunit composition of (alpha,beta,gamma)6.

Its subcellular location is the cytoplasm. Covalent carrier of the coenzyme of citrate lyase. The protein is Citrate lyase acyl carrier protein of Escherichia fergusonii (strain ATCC 35469 / DSM 13698 / CCUG 18766 / IAM 14443 / JCM 21226 / LMG 7866 / NBRC 102419 / NCTC 12128 / CDC 0568-73).